Consider the following 1246-residue polypeptide: Respiratory nitrate reductase 2 alpha chain (1246 aa).

A 4Fe-4S Mo/W bis-MGD-type domain is found at 43-107 (DKIVRSTHGV…SYSWYLYSAN (65 aa)). [4Fe-4S] cluster-binding residues include His50, Cys54, Cys58, and Cys93. Residue Asp223 participates in Mo-bis(molybdopterin guanine dinucleotide) binding.

This sequence belongs to the prokaryotic molybdopterin-containing oxidoreductase family. As to quaternary structure, tetramer composed of an alpha, a beta and 2 gamma chains. Alpha and beta are catalytic chains; gamma chain is involved in binding the enzyme complex to the cytoplasmic membrane. Requires [4Fe-4S] cluster as cofactor. It depends on Mo-bis(molybdopterin guanine dinucleotide) as a cofactor.

It localises to the cell membrane. It carries out the reaction nitrate + a quinol = a quinone + nitrite + H2O. Functionally, this is a second nitrate reductase enzyme which can substitute for the NRA enzyme and allows E.coli to use nitrate as an electron acceptor during anaerobic growth. The alpha chain is the actual site of nitrate reduction. The sequence is that of Respiratory nitrate reductase 2 alpha chain (narZ) from Escherichia coli (strain K12).